The following is a 624-amino-acid chain: Phosphatidylinositol 4-kinase lsb6 (624 aa).

Over residues methionine 1 to leucine 31 the composition is skewed to polar residues. The interval methionine 1 to aspartate 53 is disordered. Positions serine 40–leucine 51 are enriched in low complexity. Residues glycine 145 to valine 520 form the PI3K/PI4K catalytic domain. The tract at residues isoleucine 151–glycine 157 is G-loop. The tract at residues arginine 346–asparagine 354 is catalytic loop. Positions alanine 409–tyrosine 429 are activation loop.

The protein belongs to the PI3/PI4-kinase family. The cofactor is Mg(2+). Requires Mn(2+) as cofactor.

The protein localises to the cell membrane. The protein resides in the vacuole membrane. It localises to the golgi apparatus membrane. The enzyme catalyses a 1,2-diacyl-sn-glycero-3-phospho-(1D-myo-inositol) + ATP = a 1,2-diacyl-sn-glycero-3-phospho-(1D-myo-inositol 4-phosphate) + ADP + H(+). May play a role in endocytic and/or exocytic pathways. The protein is Phosphatidylinositol 4-kinase lsb6 (lsb6) of Schizosaccharomyces pombe (strain 972 / ATCC 24843) (Fission yeast).